Reading from the N-terminus, the 106-residue chain is Integration host factor subunit alpha (106 aa).

Belongs to the bacterial histone-like protein family. In terms of assembly, heterodimer of an alpha and a beta chain.

This protein is one of the two subunits of integration host factor, a specific DNA-binding protein that functions in genetic recombination as well as in transcriptional and translational control. This is Integration host factor subunit alpha from Nitrobacter winogradskyi (strain ATCC 25391 / DSM 10237 / CIP 104748 / NCIMB 11846 / Nb-255).